The chain runs to 754 residues: ToMV resistance protein Tm-1(GCR237) (754 aa).

Residues 1-201 (MATAQSNSPR…AGMVIGRLES (201 aa)) are N-terminal inhibitory domain NN. Residues 18–20 (DTK), Thr55, Arg92, and 124–127 (GSGG) contribute to the ATP site. Positions 211–431 (KFTVGVTMFG…VDSFLEISPK (221 aa)) are N-terminal inhibitory domain NC.

The protein belongs to the UPF0261 family. Homodimer. As to quaternary structure, (Microbial infection) Binds, via an ATP bridge, to the tobamoviruses avirulent (Avr) replication proteins (large and small subunits, e.g. tomato mosaic virus (ToMV/TMV) AC P03587, tobacco mild green mosaic virus (TMGMV) AC P18339 and pepper mild mottle virus (PMMoV) AC P89657) to inhibit their function after the translation of tobamoviruses RNA, but before the viral replication complex formation on the membrane surfaces; this interaction is not possible with resistance-breaking strains replication proteins.

Functionally, inhibitor of viral RNA replication which confers resistance to some tobamoviruses including tomato mosaic virus (ToMV) (e.g. isolate L), tobacco mosaic virus (TMV), tobacco mild green mosaic virus (TMGMV) and pepper mild mottle virus (PMMoV), but not to resistance-breaking isolates of ToMV (e.g. LT1, SL-1 and ToMV1-2) and tomato brown rugose fruit virus (ToBRFV). Prevents tobamoviruses RNA replication by affecting the association of tobamoviruses replication proteins (large and small subunits) with host membrane-associated proteins (e.g. TOM1, TOM2A and ARL8), thus inhibiting the replication complex formation on the membranes and avoiding viral negative-strand RNA synthesis. Inhibits triphosphatase activity of ToMV replication proteins. This chain is ToMV resistance protein Tm-1(GCR237), found in Solanum lycopersicum (Tomato).